The sequence spans 187 residues: Nicotinamide-nucleotide adenylyltransferase (187 aa).

This sequence belongs to the archaeal NMN adenylyltransferase family.

The protein localises to the cytoplasm. It catalyses the reaction beta-nicotinamide D-ribonucleotide + ATP + H(+) = diphosphate + NAD(+). The protein operates within cofactor biosynthesis; NAD(+) biosynthesis; NAD(+) from nicotinamide D-ribonucleotide: step 1/1. This chain is Nicotinamide-nucleotide adenylyltransferase, found in Thermococcus onnurineus (strain NA1).